Here is a 73-residue protein sequence, read N- to C-terminus: Probable movement protein p8 (73 aa).

Polar residues predominate over residues 1–12 (MSTVETPAQDTL). The interval 1-48 (MSTVETPAQDTLATKEPNKTGAKDRQQARSARLSVAAGAGRTALSQRD) is disordered. Positions 16 to 27 (EPNKTGAKDRQQ) are enriched in basic and acidic residues.

The protein belongs to the carmovirus/necrovirus/panicovirus movement protein p8 family.

It localises to the host cell wall. Functionally, cell-to-cell movement. The polypeptide is Probable movement protein p8 (Muhlenbergia (Blackwell switchgrass)).